A 65-amino-acid polypeptide reads, in one-letter code: Large ribosomal subunit protein bL35 (65 aa).

The tract at residues 1–28 (MPKMKTNRSAAKRFGKTGSGKFTRRRQN) is disordered.

It belongs to the bacterial ribosomal protein bL35 family.

The sequence is that of Large ribosomal subunit protein bL35 from Solidesulfovibrio magneticus (strain ATCC 700980 / DSM 13731 / RS-1) (Desulfovibrio magneticus).